A 62-amino-acid polypeptide reads, in one-letter code: Phospholipase A2 superbin a (62 aa).

Ca(2+) is bound by residues Tyr28, Gly30, and Gly32. Cys29 and Cys45 are oxidised to a cystine. Residue His48 is part of the active site. Asp49 is a Ca(2+) binding site.

It depends on Ca(2+) as a cofactor. As to expression, expressed by the venom gland.

The protein localises to the secreted. The enzyme catalyses a 1,2-diacyl-sn-glycero-3-phosphocholine + H2O = a 1-acyl-sn-glycero-3-phosphocholine + a fatty acid + H(+). In terms of biological role, snake venom phospholipase A2 (PLA2) that inhibits collagen-induced platelet aggregation. In terms of inhibition of platelet aggregation, superbin a is more potent as superbin b, c, and d. PLA2 catalyzes the calcium-dependent hydrolysis of the 2-acyl groups in 3-sn-phosphoglycerides. This chain is Phospholipase A2 superbin a, found in Austrelaps superbus (Lowland copperhead snake).